The sequence spans 304 residues: Phytol kinase 1, chloroplastic (304 aa).

Residues 1–59 (MAATLPLSPINHQLCRFGNNSLTTHRFCSPGFLISSPCFIGLTGMGSATQLRARRSLIS) constitute a chloroplast transit peptide. 6 helical membrane passes run 71 to 91 (VGAT…FESL), 105 to 125 (LVHI…SGST), 129 to 149 (YFAA…GLSI), 167 to 187 (ELLK…VFFW), 191 to 211 (PIGM…DIMG), and 227 to 247 (WAGS…LLYY).

Belongs to the polyprenol kinase family.

The protein localises to the plastid. Its subcellular location is the chloroplast membrane. It carries out the reaction phytol + CTP = phytyl phosphate + CDP + H(+). It functions in the pathway cofactor biosynthesis; tocopherol biosynthesis. In terms of biological role, kinase involved in the activation and reutilization of phytol from chlorophyll degradation in plant metabolism, including tocopherol biosynthesis. Catalyzes the conversion of phytol to phytol monophosphate (PMP) in the presence of CTP or UTP. No activity with ATP or GTP as phosphoryl donor. This chain is Phytol kinase 1, chloroplastic, found in Arabidopsis thaliana (Mouse-ear cress).